Here is a 527-residue protein sequence, read N- to C-terminus: N-acetylglutamate synthase, mitochondrial (527 aa).

The N-terminal 39 residues, 1-39, are a transit peptide targeting the mitochondrion; that stretch reads MAKVNSGSSGCRAMVMAGQFWTKPFALSSQRSGPHRRSA. A disordered region spans residues 28–65; sequence SSQRSGPHRRSAAEVNRRMSSSRTAGHGSKTPLWSQQE. Residues 40–83 are may stabilize the oligomeric structure; the sequence is AEVNRRMSSSRTAGHGSKTPLWSQQESYNHSSLGERSAWSNRTL. Residues 40 to 361 are amino-acid kinase domain (AAK); that stretch reads AEVNRRMSSS…SGTLFKNGDP (322 aa). In terms of domain architecture, N-acetyltransferase spans 360-511; that stretch reads DPIRRYSSLE…FAKSHPDSFC (152 aa). Substrate-binding positions include Lys-386, Lys-429, and 459–464; that span reads RSRTTN.

The protein belongs to the acetyltransferase family. As to quaternary structure, homodimer. Homotetramer.

Its subcellular location is the mitochondrion matrix. It carries out the reaction L-glutamate + acetyl-CoA = N-acetyl-L-glutamate + CoA + H(+). With respect to regulation, inhibited by L-arginine. In terms of biological role, plays a role in the regulation of ureagenesis by producing the essential cofactor N-acetylglutamate (NAG), thus modulating carbamoylphosphate synthase I (cps1) activity. In Danio rerio (Zebrafish), this protein is N-acetylglutamate synthase, mitochondrial.